The chain runs to 297 residues: MTNVVIDTKPVWGNMLPQLKWKDGTVVISEDDKHNEPYGIGKFFNFKEDFTRLYFKAIVNNPRERKTIEALISLPRSVADVCNPGGVYLGGRTLVDNVAKKFATIKASVDANGKVGYDTSDLERLGVRCRYYVDDLVKDDALMRRILLENKWKSKYPALVKPYEEYQRSKPKTIVLPTNRNNPVRSNVDIKPVNPPSSKVVKTVETDERLKDPPHTGALKTLIPLQKPIAPVQISEKPVVVKPEIKSPSKVIQTPDPQTVVAGKIIPNNESADSRSLFGSPVLLICVASLLLLIIIL.

Residues 175 to 199 (VLPTNRNNPVRSNVDIKPVNPPSSK) are disordered. Polar residues predominate over residues 176–185 (LPTNRNNPVR). A glycan (N-linked (GlcNAc...) asparagine; by host) is linked at Asn-269. Residues 277 to 297 (LFGSPVLLICVASLLLLIIIL) traverse the membrane as a helical segment.

It belongs to the ascovirus HvAV ORF18 family.

It localises to the membrane. This is an uncharacterized protein from Noctuidae (owlet moths).